Here is a 427-residue protein sequence, read N- to C-terminus: Glutamyl-tRNA reductase (427 aa).

Residues 48–51 (TCNR), S99, 104–106 (EDQ), and Q110 contribute to the substrate site. The active-site Nucleophile is the C49. 179–184 (GAGEMG) is an NADP(+) binding site.

It belongs to the glutamyl-tRNA reductase family. As to quaternary structure, homodimer.

It carries out the reaction (S)-4-amino-5-oxopentanoate + tRNA(Glu) + NADP(+) = L-glutamyl-tRNA(Glu) + NADPH + H(+). Its pathway is porphyrin-containing compound metabolism; protoporphyrin-IX biosynthesis; 5-aminolevulinate from L-glutamyl-tRNA(Glu): step 1/2. Catalyzes the NADPH-dependent reduction of glutamyl-tRNA(Glu) to glutamate 1-semialdehyde (GSA). The polypeptide is Glutamyl-tRNA reductase (Methanocella arvoryzae (strain DSM 22066 / NBRC 105507 / MRE50)).